The following is a 940-amino-acid chain: Isoleucine--tRNA ligase (940 aa).

The 'HIGH' region signature appears at 58-68; it reads PYANGNIHIGH. Glutamate 563 is a binding site for L-isoleucyl-5'-AMP. A 'KMSKS' region motif is present at residues 604 to 608; the sequence is KMSKS. Lysine 607 serves as a coordination point for ATP. Cysteine 903, cysteine 906, cysteine 923, and cysteine 926 together coordinate Zn(2+).

It belongs to the class-I aminoacyl-tRNA synthetase family. IleS type 1 subfamily. Monomer. Requires Zn(2+) as cofactor.

It is found in the cytoplasm. The catalysed reaction is tRNA(Ile) + L-isoleucine + ATP = L-isoleucyl-tRNA(Ile) + AMP + diphosphate. In terms of biological role, catalyzes the attachment of isoleucine to tRNA(Ile). As IleRS can inadvertently accommodate and process structurally similar amino acids such as valine, to avoid such errors it has two additional distinct tRNA(Ile)-dependent editing activities. One activity is designated as 'pretransfer' editing and involves the hydrolysis of activated Val-AMP. The other activity is designated 'posttransfer' editing and involves deacylation of mischarged Val-tRNA(Ile). This chain is Isoleucine--tRNA ligase, found in Buchnera aphidicola subsp. Acyrthosiphon pisum (strain 5A).